The following is a 277-amino-acid chain: Putative phosphoenolpyruvate synthase regulatory protein (277 aa).

157–164 contributes to the ADP binding site; that stretch reads GVSRCGKT.

It belongs to the pyruvate, phosphate/water dikinase regulatory protein family. PSRP subfamily.

It catalyses the reaction [pyruvate, water dikinase] + ADP = [pyruvate, water dikinase]-phosphate + AMP + H(+). It carries out the reaction [pyruvate, water dikinase]-phosphate + phosphate + H(+) = [pyruvate, water dikinase] + diphosphate. In terms of biological role, bifunctional serine/threonine kinase and phosphorylase involved in the regulation of the phosphoenolpyruvate synthase (PEPS) by catalyzing its phosphorylation/dephosphorylation. This is Putative phosphoenolpyruvate synthase regulatory protein from Cronobacter sakazakii (strain ATCC BAA-894) (Enterobacter sakazakii).